The sequence spans 81 residues: Large ribosomal subunit protein bL31B (81 aa).

Belongs to the bacterial ribosomal protein bL31 family. Type B subfamily. In terms of assembly, part of the 50S ribosomal subunit.

In Lactobacillus acidophilus (strain ATCC 700396 / NCK56 / N2 / NCFM), this protein is Large ribosomal subunit protein bL31B.